The following is a 252-amino-acid chain: Isoprenyl transferase (252 aa).

The active site involves Asp-28. Asp-28 serves as a coordination point for Mg(2+). Residues 29–32 (GNGR), Trp-33, Arg-41, His-45, and 73–75 (STE) contribute to the substrate site. Catalysis depends on Asn-76, which acts as the Proton acceptor. Substrate is bound by residues Trp-77, Arg-79, Arg-200, and 206 to 208 (RLS). Glu-219 lines the Mg(2+) pocket.

This sequence belongs to the UPP synthase family. In terms of assembly, homodimer. Mg(2+) serves as cofactor.

Its function is as follows. Catalyzes the condensation of isopentenyl diphosphate (IPP) with allylic pyrophosphates generating different type of terpenoids. In Streptococcus pneumoniae serotype 4 (strain ATCC BAA-334 / TIGR4), this protein is Isoprenyl transferase.